The primary structure comprises 110 residues: Small ribosomal subunit protein bS18c (110 aa).

The protein belongs to the bacterial ribosomal protein bS18 family. In terms of assembly, part of the 30S ribosomal subunit.

It localises to the plastid. The protein localises to the chloroplast. The sequence is that of Small ribosomal subunit protein bS18c (rps18) from Pisum sativum (Garden pea).